The chain runs to 496 residues: Gasdermin-E (496 aa).

The interval 1–56 (MFAKATRNFLREVDADGDLIAVSNLNDSDKLQLLSLVTKKKRFWCWQRPKYQFLSL) is membrane targeting domain. Residue Cys-45 is modified to S-(2-succinyl)cysteine. Lys-120 is covalently cross-linked (Glycyl lysine isopeptide (Lys-Gly) (interchain with G-Cter in ubiquitin)). S-(2-succinyl)cysteine occurs at positions 156, 168, and 180. Lys-189 is covalently cross-linked (Glycyl lysine isopeptide (Lys-Gly) (interchain with G-Cter in ubiquitin)). S-(2-succinyl)cysteine is present on residues Cys-235, Cys-371, Cys-408, Cys-417, and Cys-489.

It belongs to the gasdermin family. In terms of assembly, homooligomer; homooligomeric ring-shaped pore complex containing 27-28 subunits when inserted in the membrane. In terms of processing, cleavage at Asp-270 by CASP3 (mature and uncleaved precursor forms) or granzyme B (GZMB) relieves autoinhibition and is sufficient to initiate pyroptosis. Succination by the Krebs cycle intermediate fumarate, which leads to S-(2-succinyl)cysteine residues, inhibits processing by caspases, and ability to initiate pyroptosis. Succination modification is catalyzed by a non-enzymatic reaction caused by an accumulation of fumarate. Post-translationally, ubiquitinated at Lys-120 and Lys-189 via 'Lys-48'-linked polyubiquitin chains, leading to proteasomal degradation. Deubiquitinated by USP48, leading to increased stability. In terms of processing, palmitoylated. Expressed in cochlea. Low level of expression in heart, brain, placenta, lung, liver, skeletal muscle, kidney and pancreas, with highest expression in placenta.

It is found in the cell membrane. Its subcellular location is the cytoplasm. The protein localises to the cytosol. Its activity is regulated as follows. The full-length protein before cleavage is inactive: intramolecular interactions between N- and C-terminal domains mediate autoinhibition in the absence of activation signal. The intrinsic pyroptosis-inducing activity is carried by the released N-terminal moiety (Gasdermin-E, N-terminal) following cleavage by CASP3 or granzyme B (GZMB). Activated by NLRP1 in the absence of GSDMD expression: NLRP1 cleaves and activates CASP8, promoting downstream activation of CASP3 and subsequent activation of GSDME. With respect to regulation, (Microbial infection) Activated upon human coronavirus SARS-CoV-2 infection, leading to lung epithelial cell death. Activation takes place in response to (1) activation of NLRP1 and (2) inactivation of GSDMD following NLRP1 and GSDMD cleavage by the SARS-CoV-2 3C-like proteinase nsp5. In terms of biological role, precursor of a pore-forming protein that converts non-inflammatory apoptosis to pyroptosis. This form constitutes the precursor of the pore-forming protein: upon cleavage, the released N-terminal moiety (Gasdermin-E, N-terminal) binds to membranes and forms pores, triggering pyroptosis. Pore-forming protein produced by cleavage by CASP3 or granzyme B (GZMB), which converts non-inflammatory apoptosis to pyroptosis or promotes granzyme-mediated pyroptosis, respectively. After cleavage, moves to the plasma membrane, homooligomerizes within the membrane and forms pores of 10-15 nanometers (nm) of inner diameter, allowing the release of mature interleukins (IL1B and IL16) and triggering pyroptosis. Binds to inner leaflet lipids, bisphosphorylated phosphatidylinositols, such as phosphatidylinositol (4,5)-bisphosphate. Cleavage by CASP3 switches CASP3-mediated apoptosis induced by TNF or danger signals, such as chemotherapy drugs, to pyroptosis. Mediates secondary necrosis downstream of the mitochondrial apoptotic pathway and CASP3 activation as well as in response to viral agents. Exhibits bactericidal activity. Cleavage by GZMB promotes tumor suppressor activity by triggering robust anti-tumor immunity. Suppresses tumors by mediating granzyme-mediated pyroptosis in target cells of natural killer (NK) cells: cleavage by granzyme B (GZMB), delivered to target cells from NK-cells, triggers pyroptosis of tumor cells and tumor suppression. May play a role in the p53/TP53-regulated cellular response to DNA damage. Its function is as follows. (Microbial infection) Pore-forming protein, which promotes maternal placental pyroptosis in response to Zika virus infection, contributing to adverse fetal outcomes. This is Gasdermin-E from Homo sapiens (Human).